The following is a 360-amino-acid chain: Peptide chain release factor 1 (360 aa).

The residue at position 237 (Gln-237) is an N5-methylglutamine.

Belongs to the prokaryotic/mitochondrial release factor family. Methylated by PrmC. Methylation increases the termination efficiency of RF1.

It localises to the cytoplasm. Peptide chain release factor 1 directs the termination of translation in response to the peptide chain termination codons UAG and UAA. The sequence is that of Peptide chain release factor 1 from Azotobacter vinelandii (strain DJ / ATCC BAA-1303).